Consider the following 411-residue polypeptide: Arginine deiminase (411 aa).

Cys-401 functions as the Amidino-cysteine intermediate in the catalytic mechanism.

It belongs to the arginine deiminase family.

Its subcellular location is the cytoplasm. It catalyses the reaction L-arginine + H2O = L-citrulline + NH4(+). It functions in the pathway amino-acid degradation; L-arginine degradation via ADI pathway; carbamoyl phosphate from L-arginine: step 1/2. The polypeptide is Arginine deiminase (Staphylococcus haemolyticus (strain JCSC1435)).